Here is a 381-residue protein sequence, read N- to C-terminus: Queuine tRNA-ribosyltransferase (381 aa).

Aspartate 89 acts as the Proton acceptor in catalysis. Residues 89-93 (DSGGF), aspartate 143, glutamine 187, and glycine 214 each bind substrate. Residues 245–251 (GVGKPED) are RNA binding. The active-site Nucleophile is aspartate 264. An RNA binding; important for wobble base 34 recognition region spans residues 269–273 (TRNAR). Positions 302, 304, 307, and 333 each coordinate Zn(2+).

This sequence belongs to the queuine tRNA-ribosyltransferase family. As to quaternary structure, homodimer. Within each dimer, one monomer is responsible for RNA recognition and catalysis, while the other monomer binds to the replacement base PreQ1. The cofactor is Zn(2+).

It catalyses the reaction 7-aminomethyl-7-carbaguanine + guanosine(34) in tRNA = 7-aminomethyl-7-carbaguanosine(34) in tRNA + guanine. It functions in the pathway tRNA modification; tRNA-queuosine biosynthesis. Catalyzes the base-exchange of a guanine (G) residue with the queuine precursor 7-aminomethyl-7-deazaguanine (PreQ1) at position 34 (anticodon wobble position) in tRNAs with GU(N) anticodons (tRNA-Asp, -Asn, -His and -Tyr). Catalysis occurs through a double-displacement mechanism. The nucleophile active site attacks the C1' of nucleotide 34 to detach the guanine base from the RNA, forming a covalent enzyme-RNA intermediate. The proton acceptor active site deprotonates the incoming PreQ1, allowing a nucleophilic attack on the C1' of the ribose to form the product. After dissociation, two additional enzymatic reactions on the tRNA convert PreQ1 to queuine (Q), resulting in the hypermodified nucleoside queuosine (7-(((4,5-cis-dihydroxy-2-cyclopenten-1-yl)amino)methyl)-7-deazaguanosine). In Pectobacterium atrosepticum (strain SCRI 1043 / ATCC BAA-672) (Erwinia carotovora subsp. atroseptica), this protein is Queuine tRNA-ribosyltransferase.